The chain runs to 534 residues: Neryl diphosphate diphosphatase, chloroplastic (534 aa).

Mg(2+) contacts are provided by aspartate 272, aspartate 276, aspartate 416, and glutamate 424. Positions 272 to 276 (DDIFD) match the DDXXD motif motif.

It belongs to the terpene synthase family. Requires Mg(2+) as cofactor.

Its subcellular location is the plastid. The protein localises to the chloroplast. It catalyses the reaction neryl diphosphate + H2O = nerol + diphosphate. The protein operates within secondary metabolite biosynthesis; terpenoid biosynthesis. Monoterpene synthase that catalyzes the hydrolysis of neryl diphosphate (NPP) to form nerol and diphosphate. Is specific for NPP and has no hydrolase activity toward geranyl diphosphate (GPP) or farnesyl diphosphate (FPP). The monoterpene nerol may have an insect repellent effect for the plant leaves. The chain is Neryl diphosphate diphosphatase, chloroplastic from Glycine max (Soybean).